Here is a 530-residue protein sequence, read N- to C-terminus: DNA damage-binding protein cmr1 (530 aa).

2 disordered regions span residues 34–115 and 224–250; these read VGLF…RKSD and TKPV…LTTL. The span at 52-62 shows a compositional bias: basic residues; that stretch reads AKKKKPAPKKV. Over residues 89-108 the composition is skewed to basic and acidic residues; that stretch reads EVAKRKADEHDAALQEAERA. Residues 188–229 form a WD 1 repeat; the sequence is LTPERIYAMTFHPSESKPLIFAGDKMGHLGVLDASQTKPVSA. A compositionally biased stretch (acidic residues) spans 233-244; it reads DEDEEDDDDDPD. WD repeat units lie at residues 252-292, 302-339, 344-384, 389-430, 453-496, and 499-530; these read PHTR…SVER, VPIS…QDSA, LSDK…HKSP, EHES…ASWK, GRWV…LAQL, and DGIT…CLWM.

The protein belongs to the WD repeat DDB2/WDR76 family.

Its function is as follows. DNA-binding protein that binds to both single- and double-stranded DNA. Binds preferentially to UV-damaged DNA. May be involved in DNA-metabolic processes. This is DNA damage-binding protein cmr1 from Aspergillus terreus (strain NIH 2624 / FGSC A1156).